The following is a 204-amino-acid chain: Large ribosomal subunit protein uL18 (204 aa).

This sequence belongs to the universal ribosomal protein uL18 family. In terms of assembly, part of the 50S ribosomal subunit. Contacts the 5S and 23S rRNAs.

In terms of biological role, this is one of the proteins that bind and probably mediate the attachment of the 5S RNA into the large ribosomal subunit, where it forms part of the central protuberance. In Ignicoccus hospitalis (strain KIN4/I / DSM 18386 / JCM 14125), this protein is Large ribosomal subunit protein uL18.